A 160-amino-acid polypeptide reads, in one-letter code: F-box protein At1g15015 (160 aa).

The region spanning 1–44 (MDVTLPHHVVEDILERLPVKTLRKFKCVCSTWRSTIDSQRFKDR) is the F-box domain.

In Arabidopsis thaliana (Mouse-ear cress), this protein is F-box protein At1g15015.